The sequence spans 241 residues: Deoxynucleotide monophosphate kinase (241 aa).

A dGMP-binding site is contributed by K10. R11, G13, D15, and T16 together coordinate ATP. DGMP is bound by residues I36 and K37. Y42 is a Mg(2+) binding site. Residue R68 coordinates dGMP. Q85 and E108 together coordinate Mg(2+). R132, G139, T140, V144, W152, D175, R177, Q178, E181, and T208 together coordinate dGMP.

This sequence belongs to the dNMP kinase family. Homodimer. Requires Mg(2+) as cofactor.

It carries out the reaction dTMP + ATP = dTDP + ADP. The catalysed reaction is dGMP + ATP = dGDP + ADP. The enzyme catalyses 5-hydroxymethyl-dCMP + ATP = 5-hydroxymethyl-dCDP + ADP. With respect to regulation, inhibited by pyridoxal 5'-phosphate and diethylpyrocarbonate. Its function is as follows. Allows the synthesis of deoxyribonucleoside triphosphates necessary for the rapid viral DNA replication. Phosphorylates dGMP, dTMP and 5-hydroxymethyl-dCMP (hmdCMP) while excluding dCMP and dAMP. The phosphorylation of 5-hydroxymethyl-dCMP represents the first step in the replacement of cytosine by hydroxymethylcytosine in new viral DNA genomes. The sequence is that of Deoxynucleotide monophosphate kinase (1) from Enterobacteria phage T4 (Bacteriophage T4).